Here is a 251-residue protein sequence, read N- to C-terminus: Hydroxyacylglutathione hydrolase (251 aa).

Residues H53, H55, D57, H58, H110, D127, and H165 each coordinate Zn(2+).

It belongs to the metallo-beta-lactamase superfamily. Glyoxalase II family. Monomer. It depends on Zn(2+) as a cofactor.

The enzyme catalyses an S-(2-hydroxyacyl)glutathione + H2O = a 2-hydroxy carboxylate + glutathione + H(+). The protein operates within secondary metabolite metabolism; methylglyoxal degradation; (R)-lactate from methylglyoxal: step 2/2. Its function is as follows. Thiolesterase that catalyzes the hydrolysis of S-D-lactoyl-glutathione to form glutathione and D-lactic acid. This chain is Hydroxyacylglutathione hydrolase, found in Escherichia coli (strain ATCC 8739 / DSM 1576 / NBRC 3972 / NCIMB 8545 / WDCM 00012 / Crooks).